A 287-amino-acid chain; its full sequence is Ribosomal RNA small subunit methyltransferase A (287 aa).

Asn-35, Val-37, Gly-62, Glu-83, Asp-113, and Asn-131 together coordinate S-adenosyl-L-methionine.

The protein belongs to the class I-like SAM-binding methyltransferase superfamily. rRNA adenine N(6)-methyltransferase family. RsmA subfamily.

Its subcellular location is the cytoplasm. The enzyme catalyses adenosine(1518)/adenosine(1519) in 16S rRNA + 4 S-adenosyl-L-methionine = N(6)-dimethyladenosine(1518)/N(6)-dimethyladenosine(1519) in 16S rRNA + 4 S-adenosyl-L-homocysteine + 4 H(+). Specifically dimethylates two adjacent adenosines (A1518 and A1519) in the loop of a conserved hairpin near the 3'-end of 16S rRNA in the 30S particle. May play a critical role in biogenesis of 30S subunits. The chain is Ribosomal RNA small subunit methyltransferase A from Thermobifida fusca (strain YX).